The following is a 467-amino-acid chain: Venom serine carboxypeptidase (467 aa).

The signal sequence occupies residues 1–18 (MKKLVLLQFLFFISFARG). 2 N-linked (GlcNAc...) asparagine glycosylation sites follow: Asn130 and Asn169. Residue Ser202 is part of the active site. N-linked (GlcNAc...) asparagine glycosylation is found at Asn304, Asn322, and Asn344. Catalysis depends on residues Asp387 and His444.

It belongs to the peptidase S10 family. As to expression, expressed by the venom duct.

It is found in the secreted. The enzyme catalyses Release of a C-terminal amino acid with broad specificity.. This Apis mellifera (Honeybee) protein is Venom serine carboxypeptidase.